The sequence spans 118 residues: Small ribosomal subunit protein uS13 (118 aa).

A disordered region spans residues 94-118 (SLPLRGQRTKTNARTRKGPRKPIRK).

The protein belongs to the universal ribosomal protein uS13 family. As to quaternary structure, part of the 30S ribosomal subunit. Forms a loose heterodimer with protein S19. Forms two bridges to the 50S subunit in the 70S ribosome.

Functionally, located at the top of the head of the 30S subunit, it contacts several helices of the 16S rRNA. In the 70S ribosome it contacts the 23S rRNA (bridge B1a) and protein L5 of the 50S subunit (bridge B1b), connecting the 2 subunits; these bridges are implicated in subunit movement. Contacts the tRNAs in the A and P-sites. This is Small ribosomal subunit protein uS13 from Shewanella sediminis (strain HAW-EB3).